Consider the following 473-residue polypeptide: H(+)/Cl(-) exchange transporter ClcA (473 aa).

Residues 1–32 (MNTDTPTFEAQQVVRLRRGDLIRRLLQRDKTP) are Cytoplasmic-facing. The chain crosses the membrane as a helical span at residues 33–69 (LAILLTAAVVGTVTGLIGVAFEKAVTWVQNLRIGALV). Topologically, residues 70–76 (QTADYAI) are periplasmic. The chain crosses the membrane as a helical span at residues 77–100 (LVWPLAFILSALLAMVGYFLVRKF). The Cytoplasmic segment spans residues 101–108 (APEAGGSG). The Selectivity filter part_1 signature appears at 106-110 (GSGIP). Position 107 (Ser-107) interacts with chloride. Positions 109-116 (IPEIEGAL) form an intramembrane region, helical. Residues 117–123 (EELRPVR) are Cytoplasmic-facing. The chain crosses the membrane as a helical span at residues 124–141 (WWRVLPVKFVGGMGTLGA). Residues 142–147 (GMVLGR) lie on the Periplasmic side of the membrane. The Selectivity filter part_2 signature appears at 146–150 (GREGP). Residues 148–166 (EGPTVQIGGNIGRMVLDLF) traverse the membrane as a helical segment. Topologically, residues 167–176 (RMRSAEARHT) are cytoplasmic. 2 intramembrane regions (helical) span residues 177 to 189 (LLATGAAAGLSAA) and 193 to 201 (PLAGILFII). At 202 to 214 (EEMRPQFRYNLIS) the chain is on the cytoplasmic side. The helical transmembrane segment at 215–232 (IKAVFTGVIMSSIVFRIF) threads the bilayer. At 233–252 (NGEAPIIEVGKLSNAPVNTL) the chain is on the periplasmic side. Residues 253 to 281 (WLYLILGMIFGCVGPLFNHLVLRTQDMFQ) traverse the membrane as a helical segment. At 282–287 (RFHGGE) the chain is on the cytoplasmic side. The chain crosses the membrane as a helical span at residues 288–309 (IKKWVLMGGAIGGLCGILGLIE). Over 310–329 (PEAAGGGFNLIPIAAAGNYS) the chain is Periplasmic. A helical membrane pass occupies residues 330 to 349 (VGLLLFIFIARVLTTLLCFS). Residues 350-354 (SGAPG) lie on the Cytoplasmic side of the membrane. The Selectivity filter part_3 signature appears at 355-359 (GIFAP). A helical membrane pass occupies residues 355–376 (GIFAPMLALGTLLGTAFGMAAA). Chloride-binding residues include Ile-356 and Phe-357. The Periplasmic portion of the chain corresponds to 377–386 (ACFPQYHLEA). The helical intramembrane region spans 387–401 (GTFAIAGMGALLAAS). An intramembrane region (note=Loop between two helices) is located at residues 402–404 (VRA). Positions 405 to 416 (PLTGIVLVLEMT) form an intramembrane region, helical. Positions 417-421 (DNYQL) form an intramembrane region, note=Loop between two helices. A helical membrane pass occupies residues 422 to 438 (ILPMIITCLGATLLAQF). At 439–473 (MGGKPLYSTILARTLAKQDAEQAAKSQRSVAGENT) the chain is on the cytoplasmic side. Tyr-445 contributes to the chloride binding site.

This sequence belongs to the chloride channel (TC 2.A.49) family. ClcA subfamily. As to quaternary structure, homodimer.

It localises to the cell inner membrane. It carries out the reaction 2 chloride(in) + H(+)(out) = 2 chloride(out) + H(+)(in). Proton-coupled chloride transporter. Functions as antiport system and exchanges two chloride ions for 1 proton. Probably acts as an electrical shunt for an outwardly-directed proton pump that is linked to amino acid decarboxylation, as part of the extreme acid resistance (XAR) response. The sequence is that of H(+)/Cl(-) exchange transporter ClcA from Citrobacter koseri (strain ATCC BAA-895 / CDC 4225-83 / SGSC4696).